The primary structure comprises 121 residues: ATP synthase epsilon chain (121 aa).

It belongs to the ATPase epsilon chain family. F-type ATPases have 2 components, CF(1) - the catalytic core - and CF(0) - the membrane proton channel. CF(1) has five subunits: alpha(3), beta(3), gamma(1), delta(1), epsilon(1). CF(0) has three main subunits: a, b and c.

The protein resides in the cell membrane. In terms of biological role, produces ATP from ADP in the presence of a proton gradient across the membrane. This is ATP synthase epsilon chain from Mycobacterium marinum (strain ATCC BAA-535 / M).